A 25-amino-acid polypeptide reads, in one-letter code: Chrysophsin-1 (25 aa).

Residue His25 is modified to Histidine amide.

In terms of tissue distribution, gill. Localized in certain epithelial cells lining the surface of secondary lamellae and eosinophilic granule cell-like cells at the base of secondary lamellae.

The protein localises to the secreted. In terms of biological role, has antibacterial activity against Gram-positive bacteria B.subtilis ATCC 6633, L.garvieae ATCC 49156 and S.iniae F-8502, and Gram-negative bacteria E.coli WT-2, V.anguillarum ATCC 19264, V.penaeicida KHA, V.harveyi ATCC 14126, V.vulnificus ATCC 33148, A.salmonicida NCMB 1102 and P.putida ATCC 12633. Has hemolytic activity against human red blood cells. Seems to disrupt the membranes by adopting an alpha helical conformation. May play a significant role in innate host defense. The polypeptide is Chrysophsin-1 (Pagrus major (Red sea bream)).